The following is a 533-amino-acid chain: MQPNRPIRQALLSVSDKTGIVEFAQALVQRGVKLLSTGGTAKLLADHGLAVTEVSDYTGFPEMMDGRVKTLHPKVHGGILGRRGTDDEVMSQQGIEGIDMVVVNLYPFAATVAKPNCSLEEAVENIDIGGPTMVRSAAKNHQDVAIVVNNSDFNAILAEMDQHQNSLTLETRFDLAIKAFEHTAQYDAMIANYFGQLVKPYFVAEEEDAEAKCGQFPRTLNLNFIRKQTMRYGENGHQKAAFYVEQDVKEASVSTAKQLQGKALSYNNIADTDAALECVKSFDEPACVIVKHANPCGVALGADILAAYNRAYQTDPTSAFGGIIAFNRELDAKTAQTIIDRQFVEVIIAPTVAEEAKALLKAKKNVRVLECGEWSGTQQRLDVKRVNGGLLVQEADLGMVDLADLKVVSKRQPTEQELKDLLFCWKVAKFVKSNAIVYAKDNQTIGIGAGQMSRVYSAKIAGIKAQDEGLDVAGCVMASDAFFPFRDGIDAAAKVGIQCVIHPGGSMRDQEVIDAADEHNMVMVLTGMRHFRH.

The MGS-like domain occupies 1–148 (MQPNRPIRQA…KNHQDVAIVV (148 aa)).

This sequence belongs to the PurH family.

The enzyme catalyses (6R)-10-formyltetrahydrofolate + 5-amino-1-(5-phospho-beta-D-ribosyl)imidazole-4-carboxamide = 5-formamido-1-(5-phospho-D-ribosyl)imidazole-4-carboxamide + (6S)-5,6,7,8-tetrahydrofolate. The catalysed reaction is IMP + H2O = 5-formamido-1-(5-phospho-D-ribosyl)imidazole-4-carboxamide. It functions in the pathway purine metabolism; IMP biosynthesis via de novo pathway; 5-formamido-1-(5-phospho-D-ribosyl)imidazole-4-carboxamide from 5-amino-1-(5-phospho-D-ribosyl)imidazole-4-carboxamide (10-formyl THF route): step 1/1. Its pathway is purine metabolism; IMP biosynthesis via de novo pathway; IMP from 5-formamido-1-(5-phospho-D-ribosyl)imidazole-4-carboxamide: step 1/1. The chain is Bifunctional purine biosynthesis protein PurH from Pasteurella multocida (strain Pm70).